A 448-amino-acid chain; its full sequence is UDP-N-acetylmuramoylalanine--D-glutamate ligase (448 aa).

Residue 112–118 (GSNAKST) participates in ATP binding.

This sequence belongs to the MurCDEF family.

It localises to the cytoplasm. It catalyses the reaction UDP-N-acetyl-alpha-D-muramoyl-L-alanine + D-glutamate + ATP = UDP-N-acetyl-alpha-D-muramoyl-L-alanyl-D-glutamate + ADP + phosphate + H(+). The protein operates within cell wall biogenesis; peptidoglycan biosynthesis. In terms of biological role, cell wall formation. Catalyzes the addition of glutamate to the nucleotide precursor UDP-N-acetylmuramoyl-L-alanine (UMA). This is UDP-N-acetylmuramoylalanine--D-glutamate ligase from Acinetobacter baylyi (strain ATCC 33305 / BD413 / ADP1).